The chain runs to 1495 residues: Terminal uridylyltransferase 7 (1495 aa).

Disordered stretches follow at residues 1–30 (MGDTAKPYFVKRTKDRGTMDDDDFRRGHPQ), 43–69 (HGSKMEKGLQKKKITPGNYGNTPRKGP), 89–140 (WMND…EDGY), and 162–205 (LETT…PVID). Residues 15–26 (DRGTMDDDDFRR) are compositionally biased toward basic and acidic residues. Phosphothreonine is present on residues T57 and T64. Composition is skewed to basic and acidic residues over residues 92–118 (DSHKDQSKRWLSDEHTGNSDNWREFKP) and 128–140 (QRKDSFQENEDGY). Residues S132 and S172 each carry the phosphoserine modification. Residues 178–187 (QRSRPRKPRK) are compositionally biased toward basic residues. The Matrin-type zinc finger occupies 244–274 (YTCRLCDVLIESIAFAHKHIKEKRHKKNIKE). The PAP-associated 1 domain maps to 551–600 (VGQLWVELLRFYALEFNLADLVISIRVKELVSRELKDWPKKRIAIEDPYS). At S600 the chain carries Phosphoserine. Basic and acidic residues predominate over residues 734–756 (DDYKGDKVYHPETGRKNEKEKVG). Disordered regions lie at residues 734-757 (DDYKGDKVYHPETGRKNEKEKVGR) and 831-898 (THSV…EDDE). Residues 831-841 (THSVQGQTSEM) are compositionally biased toward polar residues. Composition is skewed to acidic residues over residues 843–859 (PSDEEEEDDEEEEEEEE), 868–880 (EDEDGMANEDELD), and 887–898 (GDEDALSEEDDE). Position 844 is a phosphoserine (S844). Phosphoserine is present on residues S893 and S939. The segment at 951 to 1495 (SKLIFTKGKS…ASAKRTQQES (545 aa)) is sufficient for monouridylation activity. The CCHC-type 1 zinc-finger motif lies at 963–980 (VVCSLCKREGHLKKDCPE). UTP is bound by residues 1047–1050 (SSKN), 1057–1060 (SDLD), N1130, K1152, 1170–1174 (SYAYT), and H1286. Residues D1058 and D1060 each coordinate Mg(2+). Positions 1233 to 1286 (SVGQLWLGLLRFYTEEFDFKEHVISIRRKSLLTTFKKQWTSKYIVIEDPFDLNH) constitute a PAP-associated 2 domain. Residues 1345 to 1362 (RCCRICGKIGHFMKDCPM) form a CCHC-type 2 zinc finger. Disordered regions lie at residues 1367–1424 (RRRR…MRAA) and 1466–1495 (CPQFKGSSGSLSSKYMTQGKASAKRTQQES). Residues 1381-1410 (PENKEKRSKEDKEIHNKYTEREVSTKEDKP) are compositionally biased toward basic and acidic residues. The CCHC-type 3 zinc finger occupies 1451-1468 (KRCFICGREGHIKKECPQ). Polar residues predominate over residues 1470–1485 (KGSSGSLSSKYMTQGK).

The protein belongs to the DNA polymerase type-B-like family. As to quaternary structure, interacts with MOV10; the interaction is RNA-dependent. It depends on Mg(2+) as a cofactor. Mn(2+) serves as cofactor.

The protein localises to the cytoplasm. The enzyme catalyses RNA(n) + UTP = RNA(n)-3'-uridine ribonucleotide + diphosphate. In terms of biological role, uridylyltransferase that mediates the terminal uridylation of mRNAs with short (less than 25 nucleotides) poly(A) tails, hence facilitating global mRNA decay. Essential for both oocyte maturation and fertility. Through 3' terminal uridylation of mRNA, sculpts, with TUT7, the maternal transcriptome by eliminating transcripts during oocyte growth. Involved in microRNA (miRNA)-induced gene silencing through uridylation of deadenylated miRNA targets. Also functions as an integral regulator of microRNA biogenesiS using 3 different uridylation mechanisms. Acts as a suppressor of miRNA biogenesis by mediating the terminal uridylation of some miRNA precursors, including that of let-7 (pre-let-7). Uridylated pre-let-7 RNA is not processed by Dicer and undergo degradation. Pre-let-7 uridylation is strongly enhanced in the presence of LIN28A. In the absence of LIN28A, TUT7 and TUT4 monouridylate group II pre-miRNAs, which includes most of pre-let7 members, that shapes an optimal 3' end overhang for efficient processing. Add oligo-U tails to truncated pre-miRNAS with a 5' overhang which may promote rapid degradation of non-functional pre-miRNA species. Does not play a role in replication-dependent histone mRNA degradation. Due to functional redundancy between TUT4 and TUT7, the identification of the specific role of each of these proteins is difficult. TUT4 and TUT7 restrict retrotransposition of long interspersed element-1 (LINE-1) in cooperation with MOV10 counteracting the RNA chaperonne activity of L1RE1. TUT7 uridylates LINE-1 mRNAs in the cytoplasm which inhibits initiation of reverse transcription once in the nucleus, whereas uridylation by TUT4 destabilizes mRNAs in cytoplasmic ribonucleoprotein granules. The protein is Terminal uridylyltransferase 7 of Homo sapiens (Human).